The primary structure comprises 229 residues: Potassium/proton antiporter CemA (229 aa).

Transmembrane regions (helical) follow at residues 6-26, 107-127, and 189-209; these read AFIP…ISLC, ILHF…SFWG, and ILSG…KYWI.

It belongs to the CemA family.

The protein localises to the plastid. It localises to the chloroplast inner membrane. It catalyses the reaction K(+)(in) + H(+)(out) = K(+)(out) + H(+)(in). Its function is as follows. Contributes to K(+)/H(+) antiport activity by supporting proton efflux to control proton extrusion and homeostasis in chloroplasts in a light-dependent manner to modulate photosynthesis. Prevents excessive induction of non-photochemical quenching (NPQ) under continuous-light conditions. Indirectly promotes efficient inorganic carbon uptake into chloroplasts. The chain is Potassium/proton antiporter CemA from Nasturtium officinale (Watercress).